The following is a 1023-amino-acid chain: 2-oxoglutarate dehydrogenase complex component E1 (1023 aa).

Residues 1 to 40 (MFHLRTCAAKLRPLTASQTVKTFSQNRPAAARTFQQIRCY) constitute a mitochondrion transit peptide. K74 carries the post-translational modification N6-succinyllysine. A Phosphoserine modification is found at S100. Ca(2+) is bound by residues H143, D156, and D158. R312 is a thiamine diphosphate binding site. K401 carries the post-translational modification N6-acetyllysine. 3 residues coordinate thiamine diphosphate: D411, N444, and I446. Mg(2+)-binding residues include D411, N444, and I446. A Glycyl lysine isopeptide (Lys-Gly) (interchain with G-Cter in ubiquitin) cross-link involves residue K534. K564 carries the N6-succinyllysine modification. Position 676 (Q676) interacts with thiamine diphosphate. K970 bears the N6-acetyllysine mark.

Belongs to the alpha-ketoglutarate dehydrogenase family. Homodimer. The 2-oxoglutarate dehydrogenase complex is composed of OGDH (2-oxoglutarate dehydrogenase; E1), DLST (dihydrolipoamide succinyltransferase; E2), DLD (dihydrolipoamide dehydrogenase; E3), and the assembly factor KGD4. It contains multiple copies of the three enzymatic components (E1, E2 and E3). In the nucleus, the 2-oxoglutarate dehydrogenase complex associates with KAT2A. Interacts with ABHD11; this interaction maintains the functional lipoylation of the 2-oxoglutarate dehydrogenase complex. It depends on thiamine diphosphate as a cofactor. Mg(2+) is required as a cofactor.

The protein localises to the mitochondrion. The protein resides in the nucleus. The catalysed reaction is N(6)-[(R)-lipoyl]-L-lysyl-[protein] + 2-oxoglutarate + H(+) = N(6)-[(R)-S(8)-succinyldihydrolipoyl]-L-lysyl-[protein] + CO2. Its activity is regulated as follows. Calcium ions and ADP stimulate, whereas ATP and NADH reduce catalytic activity. 2-oxoglutarate dehydrogenase (E1o) component of the 2-oxoglutarate dehydrogenase complex (OGDHC). Participates in the first step, rate limiting for the overall conversion of 2-oxoglutarate to succinyl-CoA and CO(2) catalyzed by the whole OGDHC. Catalyzes the irreversible decarboxylation of 2-oxoglutarate (alpha-ketoglutarate) via the thiamine diphosphate (ThDP) cofactor and subsequent transfer of the decarboxylated acyl intermediate on an oxidized dihydrolipoyl group that is covalently amidated to the E2 enzyme (dihydrolipoyllysine-residue succinyltransferase or DLST). Plays a key role in the Krebs (citric acid) cycle, which is a common pathway for oxidation of fuel molecules, including carbohydrates, fatty acids, and amino acids. Can catalyze the decarboxylation of 2-oxoadipate in vitro, but at a much lower rate than 2-oxoglutarate. Mainly active in the mitochondrion. A fraction of the 2-oxoglutarate dehydrogenase complex also localizes in the nucleus and is required for lysine succinylation of histones: associates with KAT2A on chromatin and provides succinyl-CoA to histone succinyltransferase KAT2A. In Homo sapiens (Human), this protein is 2-oxoglutarate dehydrogenase complex component E1.